We begin with the raw amino-acid sequence, 4083 residues long: MTDDQVAQALVGYVFNVAKLFLKLGAEQDAFARTHGAKFEEWVGNGNMRTLFLVKDEEGEVQVLEELEGPEAEGPEQSGRLLLIKNRPFVDGSAPMESQVQVLHLPPRAHFDGFKSFVSFGVATMFDAVVSTNSNLEAKQESINSARRKIKDLSLSLQSLQQFIEVPDISATAHPLIKKIIAEGANPRNYTTYISDEQFADSQFLNSLQKIANGWIKSAQNLTKLTRNIEDGSATDEIRFWINLEQSLLALEKQIAIPEVEITLSILTAAKRFHATVTFISDTGLRDRILETQSYNQIMSDFPLADLQTATSFTKLGEAIESISIALKKLKVSTYPLARAVTFVEKISTELDQKLREMLPNLISSDFISFQEDYDHCIKIINQWEALLKEFTSLIRELMRKRSEKFIFMKIDTQTDSLKEVLNTVAAFRKKHDILIHVLKGIGYDTLSEDIQSIYEPVQYQDPLRDNASKWANAEAAYNQRVSLLENKLVDMLKKKLDDCKSSDSMFSIFEKYRPLMKRPRIQGAVREYQHELLHNVKDDLEHIHQQLSLQKWNSELSRLNDIPPVSASIIWSKQLTKKLQNLTSRLGLILGEDWISTSEGSQIFVECSSIMKVLNTDKLFETWVSNVSSQNFLLDEPIFKILITNEEYELHVNFDSVVGSLFKEVRNLMWMGFNVPSNIIKNSRRVRSLYPHAVMVSELLQTFVSAVQSFQERPHTWLLLKDETENIWQLLSAMITDTWDSVPLFEDDASHERAEDIQRDEPSILRLEHSIGELLSKFQQLDGLEKGLSSCLQQLEVFGKLDLQNLEVLINKIQLLVDQATLHGFHNMSGFIDYLNTRIRSYLVSTVSKILEESQLSPKKHYILQQGKKVTISPSIEETKKAWMRDFQKTLEVATNLPKITDKKFDITEGQMENFTDIGTDLSESLIKAFLRIEDACHAIDEHFQKWKKLELLWCLDELTLLERLGSDVEVSYRFLLDFMEERKAIDMVDSEITIAGDTMINNEQVYVRVSAKYDNWQRVLCEKLLENYMDHASEFDTQLVHSRRLLETSIINLGSLSKTTELIAYVDDIKNNLDLMFTRYSLLLNTQKLLQKLRFRIPQNFIHAEQIESDLVSLREICLRKEDLINKNRDAISNKLEAELLKIQEVANSLSQSWSKKKPLSVSIQPSEALSVLNTFEDSIAKVNTERELINRAAKILLVPIKLQNVLSPVIEEVNDYKAVWSSVDGLWNSFNATLSVKWADFESTAVKHRLEALMKKCQDMPPKVLQYKIFQNIAGSIEATLKSMHLLKALKEPAIKPRHWSILFKQLGASHIVSGNIDDQTFTLEDILQLNILLNEVSVKKIVIKARNENVLESSLSQMKARWRATKFDQFVHSSGLVLVKGWDVIFSNCNDDLNMITSMKNSPYFKVFEQEALEWETKLSNFYDIVLSWVEVQRQWMYLFGILAKKTEMKNLLPIEASKFASLTSEYNSLLLKLYGSEIAIDILHVHSTLPTLKRMAESLTKIRKSLNDFLETQRRLFPRFYFVGNEDLLQIIGAGDNFSEFSRHLSKLFSSVSDFIYDESLIQGVYSLEGETLLFANPVRVTPSSKLDQWMNEVDLEIKLTLSTLVKNCLESYRTSGSLKHIIEKYPFQALLLALQCTWTNKIETSMTKDNFGSICSSIDEEMASLAAVIDSYPTVTEKRKVESLIVELVHLKTITETLKNVELEQIDFHWKQTQRFYWDDNSNDPLNSITIEQSCVSFCYGFEYIGVPERLIYTPLLDSCFNAMVLALSEHMGGCPFGPAGTGKTETIKALGQNFGRMVLVFNCDDSFDFQAMSRLLFGITQVGAWGCFDEFNRLEEKILSAVSTQVEAIQLSLVQGKPEIEVLDKKGSLNSNTGIFITMNPGYAGRSELPENLKKMFREFAMMKPDALVIAEVILTILGLENPRVLAEKIVSLFKLLNDKTTSQKHYDFGLRALKSVLRNCLTILRSTTDLDSTQVLLRSLNEMVVPKLISVDEAVYEEAIADFFPGSRIKPSNEQLLSYLASYCESNQLVASDLFIKKCSQFYDIQKTQQAIILAGDAGTGKTSVWKSVINSMKRSGAKENIVYIIDTKTLKKEDLYGKLDPVTFDWKDGIFTHLLRKTLLDTMGNFKNSNIWIVFDSDLDPNYTETLNSVLDDNKVLTLPNGERLKIPPNLHILFEVQDLEHATAATVSRCGMIWFANNTLAAQDILISCLSREVATLQQDADVHDNIIATIQDIFAQFIQGSTLGNVIEATYKADHIMGVDFCRFIETAVTLLSCDIKKNKKQLSRLSQVACVRYMSKRLALVLIWAFVGGSDLETREKFSETICELLGISDIPTGSKFLLDYDVSVATQDWVPVSAEVPKTSLESHEVLIPDLIIPTVDTVRHETLLFDLLNADRPLILCGPPGSGKTMTLYNTLKRSDRFNIIGINFSKDTSVELFLKTLEQHTICTPTSRGIIMQPKAHGKQLVVFCDEINLPMLDEYGSQPVILFLRQLIEKRGFWNVQESKWVFIERIQIVGACNPPGHAGRVSITPRFLRHASIVMVDYPGQIAMEQIYETFFNAIFKLTPKLKGFASDFTKASLQVYYDCKATYTSEAHSHYIYSPRELTRWVRGIHFTISDSGNIDLAYMLELWAHESLRLFSDRLVSSSEKNIFQSILQNAITTHFPNQPLGSLESSQLLFSNWLSLNYSKVVKSEMYTFIKERLKTFAEEELDTELTIYDDMIDNILRIDRILKQVQGHGILVGPNYSGKTTITRFVAWMNGIKVVRPTIHRHFTIENFDEFLKQMLLRCGTESEKICLIIDESNILETSFLERMNTLLANSDVPGLFEADEYEALLSKIGQRISQLGLLLDTEQEMYDWFTSEISKNLHVIFNINDPDNRESTQLITSPALFNRSVINWIGTWSSRSCLHVVNEVIKNMPLDRADYTIPHHAAANLIVPDGNLVTIRDVVANLFVLFHEQYHRLLGNSQGSPSAFLTSLRRFQSLYMSKLKELEEHQRFTLVGLEKLKDTVIKVKQLNQSLSQKQVELQQKEKEARDTLDKMLVDQNEAERKQEASVEIQKILALQEKEINERRKIIMADLAVAEPAILEAQRGVKNIKKQQFTELRSMLNPPDAVKTTLEAVCVILGYSCKTWKDIQLAIRKDEFVTDIVYYNTETMMTPAMKQDIETDYLSRPKFNYESVNRASLACGPLYQWIVAQISYSEMLVKVTPLKEEMVKVENEMLQNKARLMAAGEMIKELQTSIESSKVSYSKLIREVEITKTEMESVQSKVERSIKLMESLTGEKERWIKNTEHFKDWNKNLIGNCFLSSLYESYCGPHDQSLRLKLFTIWSNTLAKFGIEYEPTYSFITDMVNPLTKVNWVACGLPDNELFVANFHIAMNSCHYPYVIDPSSTIVDTFANFYGRKMMITSFLDVGFVKQLENALRFGGCILIQDGEFFDPIISHLIAKEFKKAGGRLTVQIGDHEVDVSTSFQLIIHSKDPNSYMSSFVKTRMAVINFTVSKGSIEAQALQITLEKENPELQKQRTDLLKLNGEYKLHLRSLEDKLLESLNESDGSILENDSLISTLEQLKIESSEIAKKIEETNTVIVKVEDLVNEYNVLGEQSVLIFNLLESITQWHWFYQIPIEQFMECFSSIFATKTRENMTRSEHLLLALYEHVYMWFSHVFKDRDRMAFGILLFASYHHSRESKFFSEHFWKIIEGIASDTLGTVEHITDTKLEQLVAAANEKDYLKGLKSLLEFLPESSWHDSVPKYQNIIVACERGVDGTFKVQQLAQEMGKTVHSVALGSAESISMAEQDLIQYSGEGKWLLLQNLQMSHEWANTVLPKKLESIKANPDFRVFMTCGIQSKPLVVPLLSRSYKIAYEGEPGVLNTVCELWRTQSEELKNVKPVEKLHSKFILVWFHSIIMARCRLAPIGFTKKYDFHDGDFHAGSKFLDHIFEQSSNGKEHVDPDLVPWKLVSDTIGKIIYGGKVDDPADLDWCKRSARRMFSSDAYLNNFEVVQGLTVPIDRSSYSQYDKWFKSLDAAAERTTAWLELSDASALQNFYAHEARMICKKIIQTNGPTSLIH.

Residues 1–1745 (MTDDQVAQAL…TIEQSCVSFC (1745 aa)) form a stem region. Coiled coils occupy residues 127 to 166 (DAVV…FIEV), 381 to 402 (INQW…MRKR), and 801 to 821 (KLDL…VDQA). 4 AAA regions span residues 1746–1967 (YGFE…VLRN), 2026–2265 (SYLA…YKAD), 2373–2622 (SLES…WVRG), and 2716–2980 (TFAE…GNSQ). ATP contacts are provided by residues 1784–1791 (GPAGTGKT), 2064–2071 (GDAGTGKT), 2412–2419 (GPPGSGKT), and 2754–2761 (GPNYSGKT). Positions 2987–3294 (LTSLRRFQSL…RSIKLMESLT (308 aa)) are stalk. Coiled-coil stretches lie at residues 3015 to 3085 (LEKL…NERR), 3223 to 3302 (LKEE…RWIK), and 3527 to 3607 (LEKE…VEDL). AAA regions lie at residues 3364-3592 (MVNP…EIAK) and 3748-3952 (LKSL…FLDH).

Belongs to the dynein heavy chain family. In terms of assembly, consists of at least two heavy chains and a number of intermediate and light chains.

Its subcellular location is the cytoplasm. It is found in the cytoskeleton. In terms of biological role, cytoplasmic dynein acts as a motor for the intracellular retrograde motility of vesicles and organelles along microtubules. Dynein has ATPase activity; the force-producing power stroke is thought to occur on release of ADP. Required to maintain uniform nuclear distribution in hyphae. May play an important role in the proper orientation of the mitotic spindle into the budding daughter cell yeast. Probably required for normal progression of the cell cycle. This Eremothecium gossypii (strain ATCC 10895 / CBS 109.51 / FGSC 9923 / NRRL Y-1056) (Yeast) protein is Dynein heavy chain, cytoplasmic (DYN1).